The primary structure comprises 661 residues: FAST kinase domain-containing protein 3, mitochondrial (661 aa).

The RAP domain occupies Val592–Arg650.

It belongs to the FAST kinase family. As to expression, expression detected in spleen, testis, colon, heart, smooth muscle, kidney, brain, lung, liver, brown and white adipose tissue with highest expression in testis and smooth muscle.

The protein resides in the mitochondrion. In terms of biological role, required for normal mitochondrial respiration. Increases steady-state levels and half-lives of a subset of mature mitochondrial mRNAs MT-ND2, MT-ND3, MT-CYTB, MT-CO2, and MT-ATP8/6. Promotes MT-CO1 mRNA translation and increases mitochondrial complex IV assembly and activity. The chain is FAST kinase domain-containing protein 3, mitochondrial (Fastkd3) from Mus musculus (Mouse).